The following is a 1336-amino-acid chain: DNA-directed RNA polymerase subunit beta' (1336 aa).

Zn(2+) is bound by residues cysteine 60, cysteine 62, cysteine 75, and cysteine 78. 3 residues coordinate Mg(2+): aspartate 535, aspartate 537, and aspartate 539. Residues cysteine 902, cysteine 984, cysteine 991, and cysteine 994 each contribute to the Zn(2+) site.

It belongs to the RNA polymerase beta' chain family. The RNAP catalytic core consists of 2 alpha, 1 beta, 1 beta' and 1 omega subunit. When a sigma factor is associated with the core the holoenzyme is formed, which can initiate transcription. Mg(2+) serves as cofactor. Requires Zn(2+) as cofactor.

It catalyses the reaction RNA(n) + a ribonucleoside 5'-triphosphate = RNA(n+1) + diphosphate. Functionally, DNA-dependent RNA polymerase catalyzes the transcription of DNA into RNA using the four ribonucleoside triphosphates as substrates. The protein is DNA-directed RNA polymerase subunit beta' of Corynebacterium diphtheriae (strain ATCC 700971 / NCTC 13129 / Biotype gravis).